A 917-amino-acid polypeptide reads, in one-letter code: Spermatogenesis-associated protein 31D3 (917 aa).

A helical transmembrane segment spans residues 29–49 (FICLSGLGLFILYLFYMVLTL). Disordered regions lie at residues 55 to 80 (EKNNDTQKHQGRARRKRKSVTFKDRK), 152 to 195 (SVSP…PPPL), and 773 to 797 (SQETAPKNHLLHDPETSSEEDLRSN). Basic residues predominate over residues 63-74 (HQGRARRKRKSV). Residues 152–163 (SVSPLASSASGA) show a composition bias toward low complexity. Over residues 164-177 (ESSFTLASTPSATT) the composition is skewed to polar residues. Over residues 782–797 (LLHDPETSSEEDLRSN) the composition is skewed to basic and acidic residues.

It belongs to the SPATA31 family.

The protein resides in the membrane. Functionally, may play a role in spermatogenesis. This chain is Spermatogenesis-associated protein 31D3 (SPATA31D3), found in Homo sapiens (Human).